The sequence spans 722 residues: Polyribonucleotide nucleotidyltransferase (722 aa).

Residues aspartate 498 and aspartate 504 each contribute to the Mg(2+) site. Residues 565–624 (PQFHTMKIDPDKIRDIIGKGGATIRSITEETGASIDIDDNGTIKIYADDGDGMQAAIARI) enclose the KH domain. Residues 634-702 (GAVYQGKVVR…QRGRIKLSIK (69 aa)) enclose the S1 motif domain.

This sequence belongs to the polyribonucleotide nucleotidyltransferase family. Component of the RNA degradosome, which is a multiprotein complex involved in RNA processing and mRNA degradation. It depends on Mg(2+) as a cofactor.

The protein resides in the cytoplasm. It carries out the reaction RNA(n+1) + phosphate = RNA(n) + a ribonucleoside 5'-diphosphate. In terms of biological role, involved in mRNA degradation. Catalyzes the phosphorolysis of single-stranded polyribonucleotides processively in the 3'- to 5'-direction. The sequence is that of Polyribonucleotide nucleotidyltransferase from Saccharophagus degradans (strain 2-40 / ATCC 43961 / DSM 17024).